The chain runs to 68 residues: Putative membrane protein insertion efficiency factor (68 aa).

It belongs to the UPF0161 family.

It localises to the cell inner membrane. Its function is as follows. Could be involved in insertion of integral membrane proteins into the membrane. The protein is Putative membrane protein insertion efficiency factor of Hydrogenobaculum sp. (strain Y04AAS1).